We begin with the raw amino-acid sequence, 336 residues long: Ferredoxin--NADP reductase (336 aa).

7 residues coordinate FAD: glutamate 34, glutamine 42, tyrosine 47, valine 87, phenylalanine 121, aspartate 286, and serine 326.

Belongs to the ferredoxin--NADP reductase type 2 family. Homodimer. FAD is required as a cofactor.

It catalyses the reaction 2 reduced [2Fe-2S]-[ferredoxin] + NADP(+) + H(+) = 2 oxidized [2Fe-2S]-[ferredoxin] + NADPH. This chain is Ferredoxin--NADP reductase, found in Leuconostoc mesenteroides subsp. mesenteroides (strain ATCC 8293 / DSM 20343 / BCRC 11652 / CCM 1803 / JCM 6124 / NCDO 523 / NBRC 100496 / NCIMB 8023 / NCTC 12954 / NRRL B-1118 / 37Y).